The sequence spans 398 residues: Phosphoglycerate kinase (398 aa).

Residues 23–25 (DLN), arginine 38, 61–64 (HFGR), arginine 119, and arginine 152 contribute to the substrate site. ATP-binding positions include lysine 202, glutamate 324, and 354–357 (GGDT).

This sequence belongs to the phosphoglycerate kinase family. In terms of assembly, monomer.

Its subcellular location is the cytoplasm. The enzyme catalyses (2R)-3-phosphoglycerate + ATP = (2R)-3-phospho-glyceroyl phosphate + ADP. It participates in carbohydrate degradation; glycolysis; pyruvate from D-glyceraldehyde 3-phosphate: step 2/5. The protein is Phosphoglycerate kinase of Rhodopseudomonas palustris (strain ATCC BAA-98 / CGA009).